A 23-amino-acid chain; its full sequence is Septenin 2 (23 aa).

As to expression, expressed in skin glands.

The protein localises to the secreted. Its function is as follows. May act as an antimicrobial peptide. The protein is Septenin 2 of Osteopilus septentrionalis (Cuban treefrog).